Here is a 424-residue protein sequence, read N- to C-terminus: Na(+), Li(+), K(+)/H(+) antiporter (424 aa).

Transmembrane regions (helical) follow at residues 15–35, 42–62, 74–94, 105–125, 141–161, 165–185, 227–247, 274–294, 305–325, 327–347, 367–389, and 393–415; these read VGEF…AIYF, GLAG…NLFG, MLVS…LANS, VAFT…QAMI, FYTT…VLFF, FELL…LRFY, LLFV…DLVI, TSFG…TVVI, WVFF…PMTS, FWIF…VVGL, AASL…TAWF, and WTFI…MFHL.

It belongs to the major facilitator superfamily.

The protein resides in the cell membrane. With respect to regulation, norfloxacin transport is inhibited by CCCP. Exhibits dual functions as a Na(+)(Li(+)/K(+))/H(+) antiporter and a multidrug efflux pump. Catalyzes the efflux of Na(+), Li(+) and K(+) in exchange for external protons. Shows a preference for Na(+), followed by K(+) and Li(+). Can also function as a multidrug efflux pump. Transports ethidium bromide and norfloxacin. This Planococcus maritimus protein is Na(+), Li(+), K(+)/H(+) antiporter.